The following is a 229-amino-acid chain: Large ribosomal subunit protein uL1 (229 aa).

The protein belongs to the universal ribosomal protein uL1 family. As to quaternary structure, part of the 50S ribosomal subunit.

Binds directly to 23S rRNA. The L1 stalk is quite mobile in the ribosome, and is involved in E site tRNA release. Its function is as follows. Protein L1 is also a translational repressor protein, it controls the translation of the L11 operon by binding to its mRNA. This is Large ribosomal subunit protein uL1 from Streptococcus pneumoniae (strain JJA).